The chain runs to 126 residues: Large-conductance mechanosensitive channel (126 aa).

2 helical membrane-spanning segments follow: residues 17–37 and 70–90; these read VDLA…SSFI and GLFL…FLII.

The protein belongs to the MscL family. As to quaternary structure, homopentamer.

Its subcellular location is the cell inner membrane. Functionally, channel that opens in response to stretch forces in the membrane lipid bilayer. May participate in the regulation of osmotic pressure changes within the cell. This chain is Large-conductance mechanosensitive channel, found in Flavobacterium johnsoniae (strain ATCC 17061 / DSM 2064 / JCM 8514 / BCRC 14874 / CCUG 350202 / NBRC 14942 / NCIMB 11054 / UW101) (Cytophaga johnsonae).